Consider the following 403-residue polypeptide: MASLGLSFPPAAKTPTYLASSSSTFFSNSSLSVRTSQFRSRNSVFACVKCDMPESLNVGNGNPSIPIINERTLPKFLESARMEKSVNRTNTRLKLFSGTANPALAQEIAWYMGLDLGKVNIKRFADGEIYVQLQESVRGCDVYLVQPTCTPTNENLMELLIMVDACRRASAKKVTAVIPYFGYARADRKTQGRESIAAKLVANLITEAGADRVLACDLHSGQSMGYFDIPVDHVYCQPVILDYLASKSIPSEDLVVVSPDVGGVARARAFAKKLSDAPLAIVDKRRSGHNVAEVMNLIGDVRGKVAIMVDDMIDTAGTIVKGAALLHQEGAREVYACCTHAVFSPPAIERLSGGLLQEVIVTNTLPVAEKNYFPQLTILSVANLLGETIWRVHDDSSVSSIFL.

The N-terminal 49 residues, 1–49, are a transit peptide targeting the chloroplast; sequence MASLGLSFPPAAKTPTYLASSSSTFFSNSSLSVRTSQFRSRNSVFACVK. Mg(2+) contacts are provided by Asp217, His219, Asp228, and Asp232. The tract at residues 303–318 is binding of phosphoribosylpyrophosphate; the sequence is GKVAIMVDDMIDTAGT.

It belongs to the ribose-phosphate pyrophosphokinase family. The cofactor is Mg(2+).

It localises to the plastid. The protein localises to the chloroplast. It carries out the reaction D-ribose 5-phosphate + ATP = 5-phospho-alpha-D-ribose 1-diphosphate + AMP + H(+). The polypeptide is Ribose-phosphate pyrophosphokinase 1, chloroplastic (PRS1) (Arabidopsis thaliana (Mouse-ear cress)).